The following is a 331-amino-acid chain: Tetraspanin-10 (331 aa).

The interval 1 to 34 (MKEEECSPLLSQDTAGREHPLTRNSPPTANIPCP) is disordered. The Cytoplasmic portion of the chain corresponds to 1 to 76 (MKEEECSPLL…LSTGSNCVKY (76 aa)). The helical transmembrane segment at 77–97 (LIFLSNFLFSLPSLLALAAGL) threads the bilayer. Topologically, residues 98–120 (WGLTVKRSQGIGWGGPVPTDPML) are extracellular. The chain crosses the membrane as a helical span at residues 121–141 (MLVLGGLVVSVVSLSGCLGAF). Residues 142–152 (CENSCLLHWYC) lie on the Cytoplasmic side of the membrane. The chain crosses the membrane as a helical span at residues 153-173 (GAVLFCLALEALAGVLMVTLW). The Extracellular segment spans residues 174 to 331 (KPLQDSLKYT…AAEDIEAGPL (158 aa)). Cystine bridges form between Cys210–Cys277, Cys211–Cys241, Cys227–Cys235, and Cys242–Cys256. Asn226 is a glycosylation site (N-linked (GlcNAc...) asparagine).

It belongs to the tetraspanin (TM4SF) family. In terms of assembly, interacts with ADAM10.

It is found in the cell membrane. In terms of biological role, part of TspanC8 subgroup, composed of 6 members that interact with the transmembrane metalloprotease ADAM10. This interaction is required for ADAM10 exit from the endoplasmic reticulum and for enzymatic maturation and trafficking to the cell surface as well as substrate specificity. Different TspanC8/ADAM10 complexes have distinct substrates. The chain is Tetraspanin-10 (Tspan10) from Mus musculus (Mouse).